The following is a 238-amino-acid chain: uncharacterized protein (238 aa).

An N-terminal signal peptide occupies residues 1–19; that stretch reads MKINLFFVFLFELLHFVAA. Topologically, residues 20–197 are lumenal; that stretch reads YSCEGDESAA…LALYGHLSQK (178 aa). Residues 198-216 traverse the membrane as a helical segment; that stretch reads YTPLGMNVAIFGISAYIMY. At 217–238 the chain is on the cytoplasmic side; sequence RSSKKAKQKQAAAAAAAAAKKK.

The protein resides in the endoplasmic reticulum membrane. This is an uncharacterized protein from Schizosaccharomyces pombe (strain 972 / ATCC 24843) (Fission yeast).